The chain runs to 62 residues: MAKTIVVKQIGSPIRRPAIQRETLKGLGLNKMNRTRELEDTPAVRGMVAKIPHLAVIIEERG.

The protein belongs to the universal ribosomal protein uL30 family. Part of the 50S ribosomal subunit.

The chain is Large ribosomal subunit protein uL30 from Paracoccus denitrificans (strain Pd 1222).